We begin with the raw amino-acid sequence, 1595 residues long: Pentafunctional AROM polypeptide (1595 aa).

Residues 1–384 (MGVPTKISIL…HEPRASTVSN (384 aa)) form a 3-dehydroquinate synthase region. Residues 44-46 (DTN), 81-84 (ESSK), 114-116 (GGV), and aspartate 119 each bind NAD(+). Arginine 130 serves as a coordination point for 7-phospho-2-dehydro-3-deoxy-D-arabino-heptonate. 139-140 (TT) is a binding site for NAD(+). 7-phospho-2-dehydro-3-deoxy-D-arabino-heptonate contacts are provided by aspartate 146 and lysine 152. Lysine 161 lines the NAD(+) pocket. Position 162 (asparagine 162) interacts with 7-phospho-2-dehydro-3-deoxy-D-arabino-heptonate. NAD(+)-binding positions include 179–182 (FLNT) and asparagine 190. Residue glutamate 194 participates in Zn(2+) binding. Residues 194 to 197 (EVIK) and lysine 250 each bind 7-phospho-2-dehydro-3-deoxy-D-arabino-heptonate. Glutamate 260 (proton acceptor; for 3-dehydroquinate synthase activity) is an active-site residue. Residues 264-268 (RNLLN) and histidine 271 each bind 7-phospho-2-dehydro-3-deoxy-D-arabino-heptonate. Residue histidine 271 participates in Zn(2+) binding. Histidine 275 acts as the Proton acceptor; for 3-dehydroquinate synthase activity in catalysis. The 7-phospho-2-dehydro-3-deoxy-D-arabino-heptonate site is built by histidine 287 and lysine 356. Position 287 (histidine 287) interacts with Zn(2+). Residues 397 to 842 (VSPGVPKGLD…WDSLAQTFKV (446 aa)) form an EPSP synthase region. Cysteine 824 serves as the catalytic For EPSP synthase activity. The tract at residues 866 to 1057 (ASIFIIGMRG…RRKENTFFVS (192 aa)) is shikimate kinase. ATP is bound at residue 872-879 (GMRGAGKT). Residues 1058–1278 (LTLPDLGLAA…AAPGQLSARE (221 aa)) form a 3-dehydroquinase region. Histidine 1181 functions as the Proton acceptor; for 3-dehydroquinate dehydratase activity in the catalytic mechanism. Lysine 1209 functions as the Schiff-base intermediate with substrate; for 3-dehydroquinate dehydratase activity in the catalytic mechanism. The segment at 1291–1595 (AKKFAVIGNP…MGVLPSEDIS (305 aa)) is shikimate dehydrogenase.

In the N-terminal section; belongs to the sugar phosphate cyclases superfamily. Dehydroquinate synthase family. It in the 2nd section; belongs to the EPSP synthase family. The protein in the 3rd section; belongs to the shikimate kinase family. This sequence in the 4th section; belongs to the type-I 3-dehydroquinase family. In the C-terminal section; belongs to the shikimate dehydrogenase family. In terms of assembly, homodimer. Zn(2+) is required as a cofactor.

It is found in the cytoplasm. It catalyses the reaction 7-phospho-2-dehydro-3-deoxy-D-arabino-heptonate = 3-dehydroquinate + phosphate. The enzyme catalyses 3-dehydroquinate = 3-dehydroshikimate + H2O. The catalysed reaction is shikimate + NADP(+) = 3-dehydroshikimate + NADPH + H(+). It carries out the reaction shikimate + ATP = 3-phosphoshikimate + ADP + H(+). It catalyses the reaction 3-phosphoshikimate + phosphoenolpyruvate = 5-O-(1-carboxyvinyl)-3-phosphoshikimate + phosphate. It functions in the pathway metabolic intermediate biosynthesis; chorismate biosynthesis; chorismate from D-erythrose 4-phosphate and phosphoenolpyruvate: step 2/7. Its pathway is metabolic intermediate biosynthesis; chorismate biosynthesis; chorismate from D-erythrose 4-phosphate and phosphoenolpyruvate: step 3/7. The protein operates within metabolic intermediate biosynthesis; chorismate biosynthesis; chorismate from D-erythrose 4-phosphate and phosphoenolpyruvate: step 4/7. It participates in metabolic intermediate biosynthesis; chorismate biosynthesis; chorismate from D-erythrose 4-phosphate and phosphoenolpyruvate: step 5/7. It functions in the pathway metabolic intermediate biosynthesis; chorismate biosynthesis; chorismate from D-erythrose 4-phosphate and phosphoenolpyruvate: step 6/7. In terms of biological role, the AROM polypeptide catalyzes 5 consecutive enzymatic reactions in prechorismate polyaromatic amino acid biosynthesis. In Ajellomyces capsulatus (strain H143) (Darling's disease fungus), this protein is Pentafunctional AROM polypeptide.